A 645-amino-acid polypeptide reads, in one-letter code: Chaperone protein DnaK (645 aa).

Threonine 200 bears the Phosphothreonine; by autocatalysis mark. The tract at residues alanine 603–lysine 645 is disordered. Positions aspartate 609 to glycine 623 are enriched in low complexity. Over residues proline 625–lysine 645 the composition is skewed to basic and acidic residues.

Belongs to the heat shock protein 70 family.

Its function is as follows. Acts as a chaperone. In Anaplasma marginale (strain St. Maries), this protein is Chaperone protein DnaK.